Reading from the N-terminus, the 251-residue chain is Octanoyltransferase (251 aa).

The region spanning 29–216 (GVIQDTLLLL…NFGFIFKEQV (188 aa)) is the BPL/LPL catalytic domain. Substrate contacts are provided by residues 74-81 (RGGDVTFH), 146-148 (AIG), and 159-161 (GFA). Catalysis depends on Cys177, which acts as the Acyl-thioester intermediate.

This sequence belongs to the LipB family.

It localises to the cytoplasm. It catalyses the reaction octanoyl-[ACP] + L-lysyl-[protein] = N(6)-octanoyl-L-lysyl-[protein] + holo-[ACP] + H(+). It participates in protein modification; protein lipoylation via endogenous pathway; protein N(6)-(lipoyl)lysine from octanoyl-[acyl-carrier-protein]: step 1/2. Functionally, catalyzes the transfer of endogenously produced octanoic acid from octanoyl-acyl-carrier-protein onto the lipoyl domains of lipoate-dependent enzymes. Lipoyl-ACP can also act as a substrate although octanoyl-ACP is likely to be the physiological substrate. This is Octanoyltransferase from Koribacter versatilis (strain Ellin345).